Here is a 433-residue protein sequence, read N- to C-terminus: NADH-quinone oxidoreductase subunit D (433 aa).

Belongs to the complex I 49 kDa subunit family. In terms of assembly, NDH-1 is composed of 14 different subunits. Subunits NuoB, C, D, E, F, and G constitute the peripheral sector of the complex.

It is found in the cell membrane. The catalysed reaction is a quinone + NADH + 5 H(+)(in) = a quinol + NAD(+) + 4 H(+)(out). Functionally, NDH-1 shuttles electrons from NADH, via FMN and iron-sulfur (Fe-S) centers, to quinones in the respiratory chain. The immediate electron acceptor for the enzyme in this species is believed to be a menaquinone. Couples the redox reaction to proton translocation (for every two electrons transferred, four hydrogen ions are translocated across the cytoplasmic membrane), and thus conserves the redox energy in a proton gradient. The protein is NADH-quinone oxidoreductase subunit D of Cutibacterium acnes (strain DSM 16379 / KPA171202) (Propionibacterium acnes).